The following is a 98-amino-acid chain: Gas vesicle protein A (98 aa).

The protein belongs to the gas vesicle GvpA family. The gas vesicle shell is 2 nm thick and consists of a single layer of this protein. It forms helical ribs nearly perpendicular to the long axis of the vesicle.

The protein resides in the gas vesicle shell. Its function is as follows. Gas vesicles are hollow, gas filled proteinaceous nanostructures found in some microorganisms. During planktonic growth they allow positioning of the organism at a favorable depth for light or nutrient acquisition. GvpA forms the protein shell. This is Gas vesicle protein A from Koribacter versatilis (strain Ellin345).